Here is a 493-residue protein sequence, read N- to C-terminus: Glutamate--tRNA ligase (493 aa).

Residues P9–S19 carry the 'HIGH' region motif. The short motif at K258–R262 is the 'KMSKS' region element. K261 contacts ATP.

The protein belongs to the class-I aminoacyl-tRNA synthetase family. Glutamate--tRNA ligase type 1 subfamily. As to quaternary structure, monomer.

The protein localises to the cytoplasm. It carries out the reaction tRNA(Glu) + L-glutamate + ATP = L-glutamyl-tRNA(Glu) + AMP + diphosphate. In terms of biological role, catalyzes the attachment of glutamate to tRNA(Glu) in a two-step reaction: glutamate is first activated by ATP to form Glu-AMP and then transferred to the acceptor end of tRNA(Glu). In Clostridioides difficile (strain 630) (Peptoclostridium difficile), this protein is Glutamate--tRNA ligase.